The following is a 27-amino-acid chain: MLIYYLQSEKVLFFLYIFLLNFKLRIL.

The protein localises to the plastid. Its subcellular location is the cyanelle. This is an uncharacterized protein from Cyanophora paradoxa.